Reading from the N-terminus, the 337-residue chain is UDP-3-O-acylglucosamine N-acyltransferase (337 aa).

His-238 acts as the Proton acceptor in catalysis.

This sequence belongs to the transferase hexapeptide repeat family. LpxD subfamily. In terms of assembly, homotrimer.

It carries out the reaction a UDP-3-O-[(3R)-3-hydroxyacyl]-alpha-D-glucosamine + a (3R)-hydroxyacyl-[ACP] = a UDP-2-N,3-O-bis[(3R)-3-hydroxyacyl]-alpha-D-glucosamine + holo-[ACP] + H(+). Its pathway is bacterial outer membrane biogenesis; LPS lipid A biosynthesis. In terms of biological role, catalyzes the N-acylation of UDP-3-O-acylglucosamine using 3-hydroxyacyl-ACP as the acyl donor. Is involved in the biosynthesis of lipid A, a phosphorylated glycolipid that anchors the lipopolysaccharide to the outer membrane of the cell. The chain is UDP-3-O-acylglucosamine N-acyltransferase from Xanthomonas campestris pv. campestris (strain 8004).